Consider the following 309-residue polypeptide: Probable WRKY transcription factor 26 (309 aa).

The disordered stretch occupies residues 1–24; that stretch reads MGSFDRQRAVPKFKTATPSPLPLS. Positions 111-176 form a DNA-binding region, WRKY 1; that stretch reads SSNKTSDDGY…YKGSHNHPKP (66 aa). 4 residues coordinate Zn(2+): Cys-142, Cys-147, His-171, and His-173. The interval 167 to 210 is disordered; that stretch reads YKGSHNHPKPQSTKRSSSTAIAAHQNSSNGDGKDIGEDETEAKR. A compositionally biased stretch (polar residues) spans 175 to 196; it reads KPQSTKRSSSTAIAAHQNSSNG. A compositionally biased stretch (basic and acidic residues) spans 197–210; sequence DGKDIGEDETEAKR. Positions 228-293 form a DNA-binding region, WRKY 2; the sequence is SDIDILDDGY…YEGKHKHQIP (66 aa). The Zn(2+) site is built by Cys-259, Cys-264, His-288, and His-290.

This sequence belongs to the WRKY group I family. In terms of assembly, interacts with VQ10.

It is found in the nucleus. In terms of biological role, transcription factor. Interacts specifically with the W box (5'-(T)TGAC[CT]-3'), a frequently occurring elicitor-responsive cis-acting element. Functions with WRKY25 and WRKY33 as positive regulator of plant thermotolerance by partially participating in ethylene-response signal transduction pathway. The polypeptide is Probable WRKY transcription factor 26 (WRKY26) (Arabidopsis thaliana (Mouse-ear cress)).